We begin with the raw amino-acid sequence, 1199 residues long: DNA-directed RNA polymerase subunit beta' (1199 aa).

Zn(2+)-binding residues include cysteine 60, cysteine 62, cysteine 75, and cysteine 78. Mg(2+) is bound by residues aspartate 449, aspartate 451, and aspartate 453. Residues cysteine 818, cysteine 892, cysteine 899, and cysteine 902 each contribute to the Zn(2+) site.

Belongs to the RNA polymerase beta' chain family. As to quaternary structure, RNAP is composed of a core of 2 alpha, a beta and a beta' subunit. The core is associated with a delta subunit, and at least one of epsilon or omega. When a sigma factor is associated with the core the holoenzyme is formed, which can initiate transcription. Mg(2+) is required as a cofactor. Requires Zn(2+) as cofactor.

It carries out the reaction RNA(n) + a ribonucleoside 5'-triphosphate = RNA(n+1) + diphosphate. In terms of biological role, DNA-dependent RNA polymerase catalyzes the transcription of DNA into RNA using the four ribonucleoside triphosphates as substrates. The polypeptide is DNA-directed RNA polymerase subunit beta' (Bacillus subtilis (strain 168)).